A 367-amino-acid chain; its full sequence is Phosphoribosylaminoimidazole-succinocarboxamide synthase (367 aa).

It belongs to the SAICAR synthetase family.

It catalyses the reaction 5-amino-1-(5-phospho-D-ribosyl)imidazole-4-carboxylate + L-aspartate + ATP = (2S)-2-[5-amino-1-(5-phospho-beta-D-ribosyl)imidazole-4-carboxamido]succinate + ADP + phosphate + 2 H(+). It functions in the pathway purine metabolism; IMP biosynthesis via de novo pathway; 5-amino-1-(5-phospho-D-ribosyl)imidazole-4-carboxamide from 5-amino-1-(5-phospho-D-ribosyl)imidazole-4-carboxylate: step 1/2. This is Phosphoribosylaminoimidazole-succinocarboxamide synthase from Vibrio parahaemolyticus serotype O3:K6 (strain RIMD 2210633).